Here is a 361-residue protein sequence, read N- to C-terminus: MDGREAMAFPGSHSQYYLQRGAFTNLAPSQVASGLHAPPPHTGLRPMSNPNIHHPQANNPGPPFSDFGHTIHMGVVSSASDADVQPPPPPPPPEEPMVKRKRGRPRKYGEPMVSNKSRDSSPMSDPNEPKRARGRPPGTGRKQRLANLGEWMNTSAGLAFAPHVISIGAGEDIAAKVLSFSQQRPRALCIMSGTGTISSVTLCKPGSTDRHLTYEGPFEIISFGGSYLVNEEGGSRSRTGGLSVSLSRPDGSIIAGGVDMLIAANLVQVVACSFVYGARAKTHNNNNKTIRQEKEPNEEDNNSEMETTPGSAAEPAASAGQQTPQNFSSQGIRGWPGSGSGSGRSLDICRNPLTDFDLTRG.

Disordered regions lie at residues 29–143 and 286–361; these read SQVA…GRKQ and NNKT…LTRG. The span at 48-59 shows a compositional bias: polar residues; sequence SNPNIHHPQANN. A compositionally biased stretch (pro residues) spans 85-95; that stretch reads QPPPPPPPPEE. Positions 99-107 match the Bipartite nuclear localization signal motif; the sequence is KRKRGRPRK. DNA-binding regions (a.T hook) lie at residues 99–111 and 130–142; these read KRKR…YGEP and KRAR…TGRK. Residues 154-297 form the PPC domain; it reads TSAGLAFAPH…KTIRQEKEPN (144 aa). Positions 306–322 are enriched in low complexity; sequence ETTPGSAAEPAASAGQQ.

Homodimer. Interacts with AHL27, AHL29 and ATAF2/NAC081.

The protein resides in the nucleus. In terms of biological role, transcription factor that specifically binds AT-rich DNA sequences related to the nuclear matrix attachment regions (MARs). This chain is AT-hook motif nuclear-localized protein 12, found in Arabidopsis thaliana (Mouse-ear cress).